The following is a 342-amino-acid chain: Isopentenyl-diphosphate delta-isomerase (342 aa).

11–12 (RK) is a substrate binding site. FMN-binding positions include Ser68, 69–71 (SMT), Ser99, and Asn127. Residue 99–101 (SMR) coordinates substrate. Gln162 contacts substrate. Mg(2+) is bound at residue Glu163. FMN is bound by residues Lys194, Thr224, 274 to 276 (GLK), and 295 to 296 (AG).

This sequence belongs to the IPP isomerase type 2 family. Homooctamer. Dimer of tetramers. The cofactor is FMN. NADPH is required as a cofactor. Mg(2+) serves as cofactor.

Its subcellular location is the cytoplasm. The enzyme catalyses isopentenyl diphosphate = dimethylallyl diphosphate. Involved in the biosynthesis of isoprenoids. Catalyzes the 1,3-allylic rearrangement of the homoallylic substrate isopentenyl (IPP) to its allylic isomer, dimethylallyl diphosphate (DMAPP). This Rickettsia akari (strain Hartford) protein is Isopentenyl-diphosphate delta-isomerase.